The sequence spans 1058 residues: Kinesin-like protein KIN-7M, chloroplastic (1058 aa).

A chloroplast-targeting transit peptide spans 1–60 (MASSSSRTRSRSPFSHRRPPSPYSSASSTSSSLINNRLLPRSSSTPTSTVYNSGGVTGSR). The interval 1-92 (MASSSSRTRS…QSYPSEGLIG (92 aa)) is disordered. A compositionally biased stretch (basic residues) spans 8–19 (TRSRSPFSHRRP). The span at 23–49 (YSSASSTSSSLINNRLLPRSSSTPTST) shows a compositional bias: low complexity. Residues 50–70 (VYNSGGVTGSRSMSITRTISD) show a composition bias toward polar residues. Positions 104–421 (SISVTVRFRP…LKFASRAKRI (318 aa)) constitute a Kinesin motor domain. Residue 184-191 (GVTSSGKT) coordinates ATP. A coiled-coil region spans residues 422–509 (EINASRNKII…QKLTKLILVS (88 aa)). A disordered region spans residues 549 to 578 (PSSTLSLASDARRSSSKFKDENSPVGSRAE). Over residues 558-570 (DARRSSSKFKDEN) the composition is skewed to basic and acidic residues. Coiled coils occupy residues 621–658 (PENSKTQIQNLENDIQEKQRQMKSLEQRITESGEASIA), 704–826 (NNEL…AQKR), 873–904 (LEAALAEKEYIEEEFRKKAEEAKRREEALEND), and 935–999 (KEDE…SQAA). Low complexity predominate over residues 824 to 838 (QKRNNNSMNSAANRN). The interval 824–847 (QKRNNNSMNSAANRNGTRPGRKAR) is disordered. The interval 922–946 (ALSIQKSDEAEPAKEDEVTELDNKN) is disordered. Residues 927 to 946 (KSDEAEPAKEDEVTELDNKN) are compositionally biased toward basic and acidic residues. An RING-type zinc finger spans residues 1011-1046 (CKVCFESPTATILLPCRHFCLCKSCSLACSECPICR).

Belongs to the TRAFAC class myosin-kinesin ATPase superfamily. Kinesin family. KIN-7 subfamily.

It localises to the plastid. The protein resides in the chloroplast. This chain is Kinesin-like protein KIN-7M, chloroplastic, found in Arabidopsis thaliana (Mouse-ear cress).